The primary structure comprises 367 residues: Queuine tRNA-ribosyltransferase (367 aa).

D91 (proton acceptor) is an active-site residue. Residues 91-95, D145, Q188, and G215 contribute to the substrate site; that span reads DSGGF. D265 functions as the Nucleophile in the catalytic mechanism. The tract at residues 270-274 is RNA binding; important for wobble base 34 recognition; it reads TRVAR. Zn(2+) contacts are provided by C303, C305, C308, and H334.

The protein belongs to the queuine tRNA-ribosyltransferase family. In terms of assembly, homodimer. Within each dimer, one monomer is responsible for RNA recognition and catalysis, while the other monomer binds to the replacement base PreQ1. The cofactor is Zn(2+).

It catalyses the reaction 7-aminomethyl-7-carbaguanine + guanosine(34) in tRNA = 7-aminomethyl-7-carbaguanosine(34) in tRNA + guanine. The protein operates within tRNA modification; tRNA-queuosine biosynthesis. Functionally, catalyzes the base-exchange of a guanine (G) residue with the queuine precursor 7-aminomethyl-7-deazaguanine (PreQ1) at position 34 (anticodon wobble position) in tRNAs with GU(N) anticodons (tRNA-Asp, -Asn, -His and -Tyr). Catalysis occurs through a double-displacement mechanism. The nucleophile active site attacks the C1' of nucleotide 34 to detach the guanine base from the RNA, forming a covalent enzyme-RNA intermediate. The proton acceptor active site deprotonates the incoming PreQ1, allowing a nucleophilic attack on the C1' of the ribose to form the product. After dissociation, two additional enzymatic reactions on the tRNA convert PreQ1 to queuine (Q), resulting in the hypermodified nucleoside queuosine (7-(((4,5-cis-dihydroxy-2-cyclopenten-1-yl)amino)methyl)-7-deazaguanosine). This is Queuine tRNA-ribosyltransferase from Thermosipho africanus (strain TCF52B).